Reading from the N-terminus, the 169-residue chain is Large ribosomal subunit protein uL10 (169 aa).

The protein belongs to the universal ribosomal protein uL10 family. Part of the ribosomal stalk of the 50S ribosomal subunit. The N-terminus interacts with L11 and the large rRNA to form the base of the stalk. The C-terminus forms an elongated spine to which L12 dimers bind in a sequential fashion forming a multimeric L10(L12)X complex.

Forms part of the ribosomal stalk, playing a central role in the interaction of the ribosome with GTP-bound translation factors. This chain is Large ribosomal subunit protein uL10, found in Rickettsia peacockii (strain Rustic).